The sequence spans 72 residues: Translation initiation factor IF-1 (72 aa).

Residues 1–72 (MSKEDVIEVE…TRGRITWRKK (72 aa)) enclose the S1-like domain.

It belongs to the IF-1 family. In terms of assembly, component of the 30S ribosomal translation pre-initiation complex which assembles on the 30S ribosome in the order IF-2 and IF-3, IF-1 and N-formylmethionyl-tRNA(fMet); mRNA recruitment can occur at any time during PIC assembly.

Its subcellular location is the cytoplasm. Functionally, one of the essential components for the initiation of protein synthesis. Stabilizes the binding of IF-2 and IF-3 on the 30S subunit to which N-formylmethionyl-tRNA(fMet) subsequently binds. Helps modulate mRNA selection, yielding the 30S pre-initiation complex (PIC). Upon addition of the 50S ribosomal subunit IF-1, IF-2 and IF-3 are released leaving the mature 70S translation initiation complex. In Alkaliphilus metalliredigens (strain QYMF), this protein is Translation initiation factor IF-1.